The sequence spans 118 residues: Large ribosomal subunit protein bL20 (118 aa).

This sequence belongs to the bacterial ribosomal protein bL20 family.

Its function is as follows. Binds directly to 23S ribosomal RNA and is necessary for the in vitro assembly process of the 50S ribosomal subunit. It is not involved in the protein synthesizing functions of that subunit. This Bacillus anthracis (strain CDC 684 / NRRL 3495) protein is Large ribosomal subunit protein bL20.